Consider the following 1135-residue polypeptide: Envelopment polyprotein (1135 aa).

Residues 1–18 (MGIWKWLVMASLVWPVLT) form the signal peptide. Over 19-485 (LRNVYDMKIE…VPGFHGWATA (467 aa)) the chain is Lumenal. 11 disulfides stabilise this stretch: Cys-29–Cys-151, Cys-63–Cys-157, Cys-109–Cys-128, Cys-133–Cys-138, Cys-175–Cys-185, Cys-210–Cys-247, Cys-234–Cys-351, Cys-376–Cys-435, Cys-380–Cys-389, Cys-405–Cys-424, and Cys-452–Cys-475. An N-linked (GlcNAc...) asparagine; by host glycan is attached at Asn-134. 2 N-linked (GlcNAc...) asparagine; by host glycosylation sites follow: Asn-235 and Asn-347. Asn-399 carries N-linked (GlcNAc...) asparagine; by host glycosylation. Residues 486–506 (ALLVTFCFGWVLIPAITFIIL) form a helical membrane-spanning segment. The Cytoplasmic portion of the chain corresponds to 507–627 (TVLKFIANIF…LNLFRYKSRC (121 aa)). A binding to the ribonucleoprotein region spans residues 516–533 (FHTSNQENRLKSVLRKIK). 2 consecutive CCHC-type zinc fingers follow at residues 545 to 565 (CDVC…GVSC) and 570 to 591 (CPYC…YKVC). Binding to the ribonucleoprotein stretches follow at residues 588–605 (YKVC…KKTV), 592–603 (QVTHRFRDDLKK), and 611–625 (TPGC…RYKS). The ITAM domain maps to 611–634 (TPGCYRTLNLFRYKSRCYIFTMWI). A YxxL motif is present at residues 615-618 (YRTL). The helical transmembrane segment at 628 to 648 (YIFTMWIFLLVLESILWAASA) threads the bilayer. The Lumenal portion of the chain corresponds to 649-1105 (SETPLTPVWN…EWISGIFSGN (457 aa)). Cystine bridges form between Cys-735/Cys-770, Cys-739/Cys-777, Cys-751/Cys-885, Cys-765/Cys-896, Cys-780/Cys-904, Cys-806/Cys-815, Cys-823/Cys-832, and Cys-863/Cys-867. Residues 757-777 (YQYETSWGCNPSDCPGVGTGC) form a fusion loop region. N-linked (GlcNAc...) asparagine; by host glycosylation occurs at Asn-928. Intrachain disulfides connect Cys-970-Cys-1000, Cys-993-Cys-1045, Cys-1010-Cys-1015, Cys-1046-Cys-1051, and Cys-1085-Cys-1089. The chain crosses the membrane as a helical span at residues 1106–1126 (WIVLIVLCVFLLFSLVLLSIL). Residues 1122–1135 (LLSILCPVRKHKKS) are binding to the ribonucleoprotein. At 1127 to 1135 (CPVRKHKKS) the chain is on the cytoplasmic side.

Belongs to the hantavirus envelope glycoprotein family. As to quaternary structure, homodimer. Homotetramer; forms heterotetrameric Gn-Gc spikes in the pre-fusion conformation. Interacts (via C-terminus) with the nucleoprotein. Interacts with host TUFM; this interaction contributes to the virus-induced degradation of mitochondria by autophagy, which leads to degradation of host MAVS and inhibition of type I interferon (IFN) responses. Interacts with host MAP1LC3B; this interaction contributes to the virus-induced degradation of mitochondria by autophagy, which leads to degradation of host MAVS and inhibition of type I interferon (IFN) responses. In terms of assembly, homotetramer; forms heterotetrameric Gn-Gc spikes in the pre-fusion conformation. Homotrimer; forms homotrimer in the post-fusion conformation at acidic pH. Interacts (via C-terminus) with the nucleoprotein. Post-translationally, specific enzymatic cleavage in vivo yield the mature proteins Glycoprotein N and Glycoprotein C.

Its subcellular location is the virion membrane. It is found in the host cell surface. It localises to the host Golgi apparatus membrane. The protein localises to the host endoplasmic reticulum membrane. The protein resides in the host mitochondrion. In terms of biological role, forms homotetramers with glycoprotein C at the surface of the virion. Attaches the virion to host cell receptors including integrin ITGAV/ITGB3. This attachment induces virion internalization predominantly through clathrin-dependent endocytosis. May also bind to host C1QBP for virus entry into the host cell. Mediates the assembly and budding of infectious virus particles through its interaction with the nucleocapsid protein and the viral genome. May dysregulate normal immune and endothelial cell responses through an ITAM motif. Translocates to mitochondria, binds to host TUFM and recruits MAP1LC3B. These interactions induce mitochondrial autophagy and therefore destruction of host MAVS leading to inhibition of type I interferon (IFN) responses. Concomitant breakdown of glycoprotein N is apparently prevented by the nucleoprotein that may inhibit Gn-stimulated autophagosome-lysosome fusion. Interacts with the viral genomic RNA. Homodimer. Homotetramer; forms heterotetrameric Gn-Gc spikes in the pre-fusion conformation. Attaches the virion to host cell receptors including integrin ITGAV/ITGB3. This attachment induces virion internalization predominantly through clathrin-dependent endocytosis. May also bind to host C1QBP for virus entry into the host cell. Class II fusion protein that promotes fusion of viral membrane with host endosomal membrane after endocytosis of the virion. The sequence is that of Envelopment polyprotein (GP) from Apodemus agrarius (Eurasian field mouse).